The chain runs to 2082 residues: Polyketide synthase ThaQ (2082 aa).

The segment at asparagine 398 to alanine 468 is disordered. Basic and acidic residues-rich tracts occupy residues aspartate 399–arginine 411, histidine 419–glutamine 430, and alanine 439–alanine 468. In terms of domain architecture, Carrier 1 spans alanine 470–histidine 546. Serine 507 is subject to O-(pantetheine 4'-phosphoryl)serine. 2 stretches are compositionally biased toward low complexity: residues alanine 560–proline 582 and aspartate 593–arginine 605. The tract at residues alanine 560–aspartate 655 is disordered. Pro residues predominate over residues proline 606 to alanine 631. Positions alanine 658–glutamate 1077 constitute a Ketosynthase family 3 (KS3) domain. Disordered regions lie at residues alanine 1250 to glutamate 1269 and alanine 1603 to aspartate 1653. 2 stretches are compositionally biased toward low complexity: residues alanine 1256 to glutamate 1269 and serine 1612 to alanine 1624. Positions alanine 1640 to aspartate 1653 are enriched in basic and acidic residues. In terms of domain architecture, Carrier 2 spans alanine 1669–valine 1743. Residue serine 1703 is modified to O-(pantetheine 4'-phosphoryl)serine. The AB hydrolase-1 domain maps to proline 1792–histidine 2022. Over residues glycine 2045 to valine 2067 the composition is skewed to low complexity. A disordered region spans residues glycine 2045–alanine 2082.

Pantetheine 4'-phosphate serves as cofactor.

It localises to the cytoplasm. Its pathway is antibiotic biosynthesis. Involved in production of the polyketide antibiotic thailandamide. The protein is Polyketide synthase ThaQ of Burkholderia thailandensis (strain ATCC 700388 / DSM 13276 / CCUG 48851 / CIP 106301 / E264).